The following is a 346-amino-acid chain: tRNA N6-adenosine threonylcarbamoyltransferase (346 aa).

H111 and H115 together coordinate Fe cation. Substrate contacts are provided by residues 134–138 (LVSGG), D167, G180, and N279. D307 contributes to the Fe cation binding site.

Belongs to the KAE1 / TsaD family. Fe(2+) serves as cofactor.

Its subcellular location is the cytoplasm. The catalysed reaction is L-threonylcarbamoyladenylate + adenosine(37) in tRNA = N(6)-L-threonylcarbamoyladenosine(37) in tRNA + AMP + H(+). Its function is as follows. Required for the formation of a threonylcarbamoyl group on adenosine at position 37 (t(6)A37) in tRNAs that read codons beginning with adenine. Is involved in the transfer of the threonylcarbamoyl moiety of threonylcarbamoyl-AMP (TC-AMP) to the N6 group of A37, together with TsaE and TsaB. TsaD likely plays a direct catalytic role in this reaction. The chain is tRNA N6-adenosine threonylcarbamoyltransferase from Burkholderia vietnamiensis (strain G4 / LMG 22486) (Burkholderia cepacia (strain R1808)).